Here is a 178-residue protein sequence, read N- to C-terminus: ATP-dependent protease subunit HslV (178 aa).

The active site involves threonine 2. 3 residues coordinate Na(+): glycine 157, cysteine 160, and threonine 163.

It belongs to the peptidase T1B family. HslV subfamily. In terms of assembly, a double ring-shaped homohexamer of HslV is capped on each side by a ring-shaped HslU homohexamer. The assembly of the HslU/HslV complex is dependent on binding of ATP.

The protein localises to the cytoplasm. The catalysed reaction is ATP-dependent cleavage of peptide bonds with broad specificity.. Its activity is regulated as follows. Allosterically activated by HslU binding. Protease subunit of a proteasome-like degradation complex believed to be a general protein degrading machinery. The protein is ATP-dependent protease subunit HslV of Hamiltonella defensa subsp. Acyrthosiphon pisum (strain 5AT).